The following is a 508-amino-acid chain: H/ACA ribonucleoprotein complex subunit 4 (508 aa).

The interval 1 to 29 (MADVEVRKEKKKKKIKEEPLDGDDIGTLQ) is disordered. Aspartate 123 acts as the Nucleophile in catalysis. The PUA domain occupies 294-369 (HKRIIMKDSS…VVAKIKRVIM (76 aa)). A disordered region spans residues 423–508 (AAQEVSPTNG…KDRDRDEAQE (86 aa)). Serine 442 carries the phosphoserine modification. A compositionally biased stretch (low complexity) spans 442–457 (STSSVEETAAAAVSEE). Residue threonine 443 is modified to Phosphothreonine. Serine 444 and serine 445 each carry phosphoserine. Threonine 449 is subject to Phosphothreonine. Serine 455 carries the post-translational modification Phosphoserine. Phosphothreonine is present on threonine 458. The span at 475-485 (EAPEAAEEEAE) shows a compositional bias: acidic residues. The span at 499–508 (KDRDRDEAQE) shows a compositional bias: basic and acidic residues.

The protein belongs to the pseudouridine synthase TruB family. As to quaternary structure, component of the box H/ACA small nucleolar ribonucleoprotein (H/ACA snoRNP) complex consisting of Nop60B, Gar1, NPH2 and Nop10, and associated with H/ACA-type snoRNAs. As to expression, expressed at higher levels in females than in males. Expressed almost exclusively in females with high levels of expression in the ovary.

It is found in the nucleus. The protein resides in the nucleolus. The enzyme catalyses a uridine in RNA = a pseudouridine in RNA. In terms of biological role, catalytic subunit of the box H/ACA small nucleolar ribonucleoprotein (H/ACA snoRNP) complex, which catalyzes pseudouridylation of rRNA. This involves the isomerization of uridine such that the ribose is subsequently attached to C5, instead of the normal N1. Pseudouridine ('psi') residues may serve to stabilize the conformation of rRNAs. Required for ribosome biogenesis; plays a central role in ribosomal RNA processing. H/ACA snoRNP complex-dependent ribosome biogenesis is important in female germline cell differentiation during oogenesis. Essential for viability and female fertility. Required for maintenance of the germline stem cell lineage during spermatogenesis. This chain is H/ACA ribonucleoprotein complex subunit 4, found in Drosophila melanogaster (Fruit fly).